Consider the following 131-residue polypeptide: Large ribosomal subunit protein bL19 (131 aa).

This sequence belongs to the bacterial ribosomal protein bL19 family.

In terms of biological role, this protein is located at the 30S-50S ribosomal subunit interface and may play a role in the structure and function of the aminoacyl-tRNA binding site. The polypeptide is Large ribosomal subunit protein bL19 (Rhodopseudomonas palustris (strain BisB18)).